The primary structure comprises 424 residues: GTPase Obg (424 aa).

Positions 1 to 158 constitute an Obg domain; that stretch reads MFIDTAKILV…RMINLEIKLL (158 aa). The 173-residue stretch at 159-331 folds into the OBG-type G domain; the sequence is ADVGLIGFPN…LIKEVTRQLS (173 aa). GTP contacts are provided by residues 165 to 172, 190 to 194, 212 to 215, 282 to 285, and 312 to 314; these read GFPNVGKS, FTTLK, DIPG, NKID, and SAA. Ser-172 and Thr-192 together coordinate Mg(2+). The OCT domain occupies 345 to 424; it reads RFMPEEKRFT…LNDFEFDFLL (80 aa).

This sequence belongs to the TRAFAC class OBG-HflX-like GTPase superfamily. OBG GTPase family. In terms of assembly, monomer. It depends on Mg(2+) as a cofactor.

The protein localises to the cytoplasm. An essential GTPase which binds GTP, GDP and possibly (p)ppGpp with moderate affinity, with high nucleotide exchange rates and a fairly low GTP hydrolysis rate. Plays a role in control of the cell cycle, stress response, ribosome biogenesis and in those bacteria that undergo differentiation, in morphogenesis control. The polypeptide is GTPase Obg (Clostridium novyi (strain NT)).